The chain runs to 703 residues: Elongation factor G (703 aa).

Residues 10 to 286 (NKVRNIGIMA…AVVKFLPSPL (277 aa)) form the tr-type G domain. GTP is bound by residues 19–26 (AHIDAGKT), 83–87 (DTPGH), and 137–140 (NKLD).

It belongs to the TRAFAC class translation factor GTPase superfamily. Classic translation factor GTPase family. EF-G/EF-2 subfamily.

Its subcellular location is the cytoplasm. Its function is as follows. Catalyzes the GTP-dependent ribosomal translocation step during translation elongation. During this step, the ribosome changes from the pre-translocational (PRE) to the post-translocational (POST) state as the newly formed A-site-bound peptidyl-tRNA and P-site-bound deacylated tRNA move to the P and E sites, respectively. Catalyzes the coordinated movement of the two tRNA molecules, the mRNA and conformational changes in the ribosome. In Nocardioides sp. (strain ATCC BAA-499 / JS614), this protein is Elongation factor G.